The chain runs to 222 residues: Mediator of RNA polymerase II transcription subunit 7 (222 aa).

A disordered region spans residues 34–55 (YKEKKAASAKQTAPNNSNGGSE). A compositionally biased stretch (polar residues) spans 42-53 (AKQTAPNNSNGG).

It belongs to the Mediator complex subunit 7 family. As to quaternary structure, component of the Mediator complex, which is composed of at least 21 subunits that form three structurally distinct submodules. The Mediator head module contains MED6, MED8, MED11, SRB4/MED17, SRB5/MED18, ROX3/MED19, SRB2/MED20 and SRB6/MED22, the middle module contains MED1, MED4, NUT1/MED5, MED7, CSE2/MED9, NUT2/MED10, SRB7/MED21 and SOH1/MED31, and the tail module contains MED2, PGD1/MED3, RGR1/MED14, GAL11/MED15 and SIN4/MED16. The head and the middle modules interact directly with RNA polymerase II, whereas the elongated tail module interacts with gene-specific regulatory proteins. MED7 interacts directly with MED1, MED4 and SRB7/MED21.

It localises to the nucleus. Its function is as follows. Component of the Mediator complex, a coactivator involved in the regulated transcription of nearly all RNA polymerase II-dependent genes. Mediator functions as a bridge to convey information from gene-specific regulatory proteins to the basal RNA polymerase II transcription machinery. The Mediator complex, having a compact conformation in its free form, is recruited to promoters by direct interactions with regulatory proteins and serves for the assembly of a functional preinitiation complex with RNA polymerase II and the general transcription factors. The Mediator complex unfolds to an extended conformation and partially surrounds RNA polymerase II, specifically interacting with the unphosphorylated form of the C-terminal domain (CTD) of RNA polymerase II. The Mediator complex dissociates from the RNA polymerase II holoenzyme and stays at the promoter when transcriptional elongation begins. The protein is Mediator of RNA polymerase II transcription subunit 7 (MED7) of Saccharomyces cerevisiae (strain ATCC 204508 / S288c) (Baker's yeast).